The chain runs to 356 residues: S-adenosylmethionine:tRNA ribosyltransferase-isomerase (356 aa).

The protein belongs to the QueA family. Monomer.

The protein resides in the cytoplasm. It catalyses the reaction 7-aminomethyl-7-carbaguanosine(34) in tRNA + S-adenosyl-L-methionine = epoxyqueuosine(34) in tRNA + adenine + L-methionine + 2 H(+). It functions in the pathway tRNA modification; tRNA-queuosine biosynthesis. In terms of biological role, transfers and isomerizes the ribose moiety from AdoMet to the 7-aminomethyl group of 7-deazaguanine (preQ1-tRNA) to give epoxyqueuosine (oQ-tRNA). This Escherichia coli (strain ATCC 8739 / DSM 1576 / NBRC 3972 / NCIMB 8545 / WDCM 00012 / Crooks) protein is S-adenosylmethionine:tRNA ribosyltransferase-isomerase.